The following is a 190-amino-acid chain: Large ribosomal subunit protein uL5 (190 aa).

The protein belongs to the universal ribosomal protein uL5 family. Part of the 50S ribosomal subunit; part of the 5S rRNA/L5/L18/L25 subcomplex. Contacts the 5S rRNA and the P site tRNA. Forms a bridge to the 30S subunit in the 70S ribosome.

Its function is as follows. This is one of the proteins that bind and probably mediate the attachment of the 5S RNA into the large ribosomal subunit, where it forms part of the central protuberance. In the 70S ribosome it contacts protein S13 of the 30S subunit (bridge B1b), connecting the 2 subunits; this bridge is implicated in subunit movement. Contacts the P site tRNA; the 5S rRNA and some of its associated proteins might help stabilize positioning of ribosome-bound tRNAs. In Bifidobacterium adolescentis (strain ATCC 15703 / DSM 20083 / NCTC 11814 / E194a), this protein is Large ribosomal subunit protein uL5.